Reading from the N-terminus, the 231-residue chain is UPF0702 transmembrane protein YetF (231 aa).

3 helical membrane-spanning segments follow: residues 5–25 (LSVA…LKLL), 33–53 (ITPF…NAVY), and 59–79 (IKEI…IEFI).

The protein belongs to the UPF0702 family.

The protein localises to the cell membrane. In Bacillus subtilis (strain 168), this protein is UPF0702 transmembrane protein YetF (yetF).